A 322-amino-acid chain; its full sequence is Transcription cofactor vestigial-like protein 2 (322 aa).

The segment covering 42–61 (ASPGSSASGSSSFSNPTPAS) has biased composition (low complexity). Disordered stretches follow at residues 42-75 (ASPG…ERPP) and 248-322 (PGRL…PTLG). Over residues 62–75 (VKEEEGSPEKERPP) the composition is skewed to basic and acidic residues. Low complexity-rich tracts occupy residues 248 to 258 (PGRLAPASAPA) and 270 to 283 (GEPA…PGGP). The span at 312-322 (SAPPALYPTLG) shows a compositional bias: pro residues.

It belongs to the vestigial family. As to quaternary structure, interacts with TEFs. Binds to TEAD1/TEF1. In terms of tissue distribution, skeletal muscle specific.

It localises to the nucleus. In terms of biological role, may act as a specific coactivator for the mammalian TEFs. May play a role in the development of skeletal muscles. In Mus musculus (Mouse), this protein is Transcription cofactor vestigial-like protein 2 (Vgll2).